Consider the following 457-residue polypeptide: SH3 domain-binding protein 5 (457 aa).

The span at 1–12 (MDTALKRSRSEE) shows a compositional bias: basic and acidic residues. The tract at residues 1–68 (MDTALKRSRS…DDINRRETEL (68 aa)) is disordered. Over residues 25–43 (EKEEEEERMEQGLEEEEEV) the composition is skewed to acidic residues. Positions 33 to 267 (MEQGLEEEEE…EIHERRRSNA (235 aa)) are sufficient for interaction with RAB11A and for guanine nucleotide exchange activity. Residues 44–53 (DPRIQGELEK) are compositionally biased toward basic and acidic residues. Coiled coils occupy residues 46–92 (RIQG…LAKK), 99–147 (DSKP…RLLE), 156–202 (AWQE…LEKK), and 213–257 (YFEL…RISD). The span at 308 to 319 (NCGNLVSEDDSE) shows a compositional bias: acidic residues. A disordered region spans residues 308 to 347 (NCGNLVSEDDSETQSVSSFSSGPTSPSEMPDQFPAVARPG). The segment covering 322–334 (SVSSFSSGPTSPS) has biased composition (low complexity). Phosphoserine; by MAPK12 and MAPK9 is present on Ser-353. The segment at 371–427 (SECSGASSPECEVERGDRAEGAENKMSDKANNNRVLSSTSAGGGRSRSQSSTSLEGQ) is disordered. Residues Ser-377 and Ser-378 each carry the phosphoserine modification. Over residues 382-398 (EVERGDRAEGAENKMSD) the composition is skewed to basic and acidic residues. A compositionally biased stretch (low complexity) spans 406–427 (LSSTSAGGGRSRSQSSTSLEGQ). Ser-420 is modified (phosphoserine). Position 423 is a phosphoserine; by MAPK12 (Ser-423).

The protein belongs to the SH3BP5 family. As to quaternary structure, interacts with BTK. Interacts with all isoforms of MAPK8, MAPK9, MAPK10 and MAPK12. Interacts with GDP-bound and nucleotide-free forms of RAB11A.

It localises to the cytoplasmic vesicle membrane. It is found in the mitochondrion. In terms of biological role, functions as a guanine nucleotide exchange factor (GEF) with specificity for RAB11A and RAB25. Inhibits the auto- and transphosphorylation activity of BTK. Plays a negative regulatory role in BTK-related cytoplasmic signaling in B-cells. May be involved in BCR-induced apoptotic cell death. This Rattus norvegicus (Rat) protein is SH3 domain-binding protein 5 (Sh3bp5).